A 169-amino-acid chain; its full sequence is ATP synthase subunit b (169 aa).

A helical membrane pass occupies residues 14 to 34 (TFLAMLISFLILVFILQQVAF).

This sequence belongs to the ATPase B chain family. In terms of assembly, F-type ATPases have 2 components, F(1) - the catalytic core - and F(0) - the membrane proton channel. F(1) has five subunits: alpha(3), beta(3), gamma(1), delta(1), epsilon(1). F(0) has four main subunits: a(1), b(2) and c(10-14). The alpha and beta chains form an alternating ring which encloses part of the gamma chain. F(1) is attached to F(0) by a central stalk formed by the gamma and epsilon chains, while a peripheral stalk is formed by the delta and b chains.

The protein resides in the cell membrane. F(1)F(0) ATP synthase produces ATP from ADP in the presence of a proton or sodium gradient. F-type ATPases consist of two structural domains, F(1) containing the extramembraneous catalytic core and F(0) containing the membrane proton channel, linked together by a central stalk and a peripheral stalk. During catalysis, ATP synthesis in the catalytic domain of F(1) is coupled via a rotary mechanism of the central stalk subunits to proton translocation. Its function is as follows. Component of the F(0) channel, it forms part of the peripheral stalk, linking F(1) to F(0). In Heliobacterium modesticaldum (strain ATCC 51547 / Ice1), this protein is ATP synthase subunit b.